Here is a 204-residue protein sequence, read N- to C-terminus: 3-dehydroquinate dehydratase (204 aa).

Residues Ser9, 30–32 (ELR), and Arg57 each bind 3-dehydroquinate. The active-site Proton donor/acceptor is His108. The active-site Schiff-base intermediate with substrate is Lys133. Positions 167, 186, and 190 each coordinate 3-dehydroquinate.

It belongs to the type-I 3-dehydroquinase family. As to quaternary structure, homodimer.

It carries out the reaction 3-dehydroquinate = 3-dehydroshikimate + H2O. It participates in metabolic intermediate biosynthesis; chorismate biosynthesis; chorismate from D-erythrose 4-phosphate and phosphoenolpyruvate: step 3/7. In terms of biological role, involved in the third step of the chorismate pathway, which leads to the biosynthesis of aromatic amino acids. Catalyzes the cis-dehydration of 3-dehydroquinate (DHQ) and introduces the first double bond of the aromatic ring to yield 3-dehydroshikimate. This is 3-dehydroquinate dehydratase from Metallosphaera sedula (strain ATCC 51363 / DSM 5348 / JCM 9185 / NBRC 15509 / TH2).